Reading from the N-terminus, the 355-residue chain is Protein MGF 360-3L (355 aa).

An ANK repeat occupies 60–92 (KLNTALVLAVKENNYDLIVLFTEWGANINYALL).

This sequence belongs to the asfivirus MGF 360 family.

In terms of biological role, plays a role in virus cell tropism, and may be required for efficient virus replication in macrophages. In Ornithodoros (relapsing fever ticks), this protein is Protein MGF 360-3L.